Consider the following 416-residue polypeptide: UPF0761 membrane protein Mpe_A1422 (416 aa).

The next 6 helical transmembrane spans lie at 63 to 83 (IALV…PMFG), 120 to 140 (LGTV…LTID), 159 to 179 (VLVY…SLTL), 198 to 218 (LSVL…AGLF), 234 to 256 (GGLF…LAQV), and 271 to 291 (IFLI…VIAA).

It belongs to the UPF0761 family.

Its subcellular location is the cell inner membrane. The chain is UPF0761 membrane protein Mpe_A1422 from Methylibium petroleiphilum (strain ATCC BAA-1232 / LMG 22953 / PM1).